A 417-amino-acid chain; its full sequence is DNA-directed RNA polymerase subunit beta (417 aa).

The protein belongs to the RNA polymerase beta chain family. In terms of assembly, in plastids the minimal PEP RNA polymerase catalytic core is composed of four subunits: alpha, beta, beta', and beta''. When a (nuclear-encoded) sigma factor is associated with the core the holoenzyme is formed, which can initiate transcription.

Its subcellular location is the plastid. The protein localises to the chloroplast. The enzyme catalyses RNA(n) + a ribonucleoside 5'-triphosphate = RNA(n+1) + diphosphate. DNA-dependent RNA polymerase catalyzes the transcription of DNA into RNA using the four ribonucleoside triphosphates as substrates. This chain is DNA-directed RNA polymerase subunit beta (rpoB), found in Saponaria officinalis (Common soapwort).